Reading from the N-terminus, the 85-residue chain is Large ribosomal subunit protein bL27 (85 aa).

A disordered region spans residues 1 to 22 (MAHKKAGGSTNNGRDSESKRLG).

The protein belongs to the bacterial ribosomal protein bL27 family.

The polypeptide is Large ribosomal subunit protein bL27 (Psychromonas ingrahamii (strain DSM 17664 / CCUG 51855 / 37)).